The primary structure comprises 416 residues: FBD-associated F-box protein At3g52670 (416 aa).

Residues 9 to 62 enclose the F-box domain; that stretch reads EDRMNQLPEDLILRILSFLPTELVIATSVLSKQWRSLWKLVPNLEFDSDDYESE. In terms of domain architecture, FBD spans 327 to 378; it reads KWNEPKYVPECLLSHLETFVWIRYDWEREEEKEVATYILRNARWLKKGTIST.

This chain is FBD-associated F-box protein At3g52670, found in Arabidopsis thaliana (Mouse-ear cress).